The sequence spans 188 residues: dCTP deaminase (188 aa).

Residues K111–R116, T135–E137, Q156, Y170, and Q180 contribute to the dCTP site. Catalysis depends on E137, which acts as the Proton donor/acceptor.

It belongs to the dCTP deaminase family. As to quaternary structure, homotrimer.

The enzyme catalyses dCTP + H2O + H(+) = dUTP + NH4(+). The protein operates within pyrimidine metabolism; dUMP biosynthesis; dUMP from dCTP (dUTP route): step 1/2. Catalyzes the deamination of dCTP to dUTP. The polypeptide is dCTP deaminase (Azotobacter vinelandii (strain DJ / ATCC BAA-1303)).